A 497-amino-acid polypeptide reads, in one-letter code: Serine/threonine-protein kinase cst-1 (497 aa).

Positions 1–27 (MPPSTDSSRRNSEEGSSDGFKLDSSAL) are disordered. Residues 35–286 (FDIVGKLGEG…ALRLCEHTFI (252 aa)) form the Protein kinase domain. Residues 41-49 (LGEGSYGSV) and lysine 64 contribute to the ATP site. The active-site Proton acceptor is the aspartate 154. Positions 367 to 416 (KSAYIPGSSKNGNSPRVQPPGHTASASDPSKNQPFAQDGTGPNFQLGTSE) are disordered. Over residues 390–416 (ASASDPSKNQPFAQDGTGPNFQLGTSE) the composition is skewed to polar residues. One can recognise an SARAH domain in the interval 446 to 493 (FEFLRNITLDELIRRKESLDSEMEEEIRELQRRYKTKRQPILDVIEIK). Residues 450–486 (RNITLDELIRRKESLDSEMEEEIRELQRRYKTKRQPI) adopt a coiled-coil conformation.

It belongs to the protein kinase superfamily. STE Ser/Thr protein kinase family. STE20 subfamily. In terms of assembly, interacts with rsf-1 (via SARAH domain); the interaction is required for the phosphorylation of cst-1. The cofactor is Mg(2+). In terms of processing, proteolytically cleaved by caspase-3 during apoptosis which results in kinase activation. Post-translationally, phosphorylated. Widely expressed in epidermal cells.

The catalysed reaction is L-seryl-[protein] + ATP = O-phospho-L-seryl-[protein] + ADP + H(+). It catalyses the reaction L-threonyl-[protein] + ATP = O-phospho-L-threonyl-[protein] + ADP + H(+). Functionally, serine/threonine-protein kinase which extends lifespan and delays tissue aging, probably by activating daf-16. This chain is Serine/threonine-protein kinase cst-1, found in Caenorhabditis elegans.